The following is a 274-amino-acid chain: MTKLIIHLVSDSSVQTAKYAANSALAQFTSVKPKLYHWPMIRNLELLNEVLSKIEYKHGIVLYTIADQELRKTLTKFCYELKIPCISVIGKIIKEMSVFSGIEIEKEQNYNNYKFDKTYFDTLNAIDYAIRHDDGQMLNELSEADIILIGPSRTSKTPTSVFLAYNGLKAANIPYVYNCPFPDFIEKDIDQLVVGLVINPNRLIEIREARLNLLQINENKSYTDFNIVQKECLEVRKICDQRNWPVIDVSTRSIEETAALIMRIYYNRKNKYNK.

Residue 150 to 157 (GPSRTSKT) participates in ADP binding.

The protein belongs to the pyruvate, phosphate/water dikinase regulatory protein family. PDRP subfamily.

It catalyses the reaction N(tele)-phospho-L-histidyl/L-threonyl-[pyruvate, phosphate dikinase] + ADP = N(tele)-phospho-L-histidyl/O-phospho-L-threonyl-[pyruvate, phosphate dikinase] + AMP + H(+). The catalysed reaction is N(tele)-phospho-L-histidyl/O-phospho-L-threonyl-[pyruvate, phosphate dikinase] + phosphate + H(+) = N(tele)-phospho-L-histidyl/L-threonyl-[pyruvate, phosphate dikinase] + diphosphate. In terms of biological role, bifunctional serine/threonine kinase and phosphorylase involved in the regulation of the pyruvate, phosphate dikinase (PPDK) by catalyzing its phosphorylation/dephosphorylation. The chain is Putative pyruvate, phosphate dikinase regulatory protein from Rickettsia peacockii (strain Rustic).